Reading from the N-terminus, the 38-residue chain is GIDPNFRTSRPVTGDHAGHKVYAPADPPVKEKALGIHG.

The span at 1-11 (GIDPNFRTSRP) shows a compositional bias: polar residues. The interval 1–38 (GIDPNFRTSRPVTGDHAGHKVYAPADPPVKEKALGIHG) is disordered. The N-terminal extension stretch occupies residues 1 to 38 (GIDPNFRTSRPVTGDHAGHKVYAPADPPVKEKALGIHG). 2 residues coordinate Zn(2+): His-16 and His-19. Basic and acidic residues predominate over residues 28–38 (PVKEKALGIHG). N6-methyllysine is present on Lys-30. Residue His-37 coordinates Zn(2+).

[3Fe-4S] cluster serves as cofactor. It depends on [4Fe-4S] cluster as a cofactor. Zn(2+) is required as a cofactor.

Its function is as follows. Ferredoxins are iron-sulfur proteins that transfer electrons in a wide variety of metabolic reactions. This chain is Zinc-containing ferredoxin (zfx), found in Metallosphaera prunae.